The primary structure comprises 526 residues: ATP synthase subunit alpha (526 aa).

Residue 171–178 (GDRQTGKT) participates in ATP binding.

It belongs to the ATPase alpha/beta chains family. In terms of assembly, F-type ATPases have 2 components, CF(1) - the catalytic core - and CF(0) - the membrane proton channel. CF(1) has five subunits: alpha(3), beta(3), gamma(1), delta(1), epsilon(1). CF(0) has four main subunits: a(1), b(1), b'(1) and c(9-12).

The protein resides in the cell inner membrane. It carries out the reaction ATP + H2O + 4 H(+)(in) = ADP + phosphate + 5 H(+)(out). Functionally, produces ATP from ADP in the presence of a proton gradient across the membrane. The alpha chain is a regulatory subunit. The protein is ATP synthase subunit alpha of Chlorobium phaeobacteroides (strain DSM 266 / SMG 266 / 2430).